The sequence spans 1046 residues: Probable inorganic carbon transporter subunit DabA1 (1046 aa).

Positions 462, 464, 721, and 736 each coordinate Zn(2+).

It belongs to the inorganic carbon transporter (TC 9.A.2) DabA family. As to quaternary structure, forms a complex with DabB1. Requires Zn(2+) as cofactor.

The protein localises to the cell inner membrane. Functionally, part of an energy-coupled inorganic carbon pump. The protein is Probable inorganic carbon transporter subunit DabA1 of Halothiobacillus neapolitanus (strain ATCC 23641 / c2) (Thiobacillus neapolitanus).